The primary structure comprises 349 residues: UPF0324 inner membrane protein YeiH (349 aa).

The Periplasmic portion of the chain corresponds to 1-12; it reads MTELTLQNHCRT. A helical transmembrane segment spans residues 13–35; that stretch reads MWHFIPGLALSAVITGVALWGGA. The Cytoplasmic segment spans residues 36-38; it reads IPA. The chain crosses the membrane as a helical span at residues 39 to 61; the sequence is VAGAGFSALTLAILLGMVIGNTI. The Periplasmic segment spans residues 62-99; that stretch reads YPQIWKQCDGGVLFAKQHLLRLGIILYGFRLTFSQIAD. The helical transmembrane segment at 100 to 122 threads the bilayer; the sequence is VGISGIVIDVLTLSSTFMLACFL. At 123–131 the chain is on the cytoplasmic side; that stretch reads GQKVFGLDR. Residues 132–151 traverse the membrane as a helical segment; that stretch reads HTSWLIGAGSSICGAAAVLA. Residues 152–162 lie on the Periplasmic side of the membrane; sequence TEPVVKAEASK. A helical transmembrane segment spans residues 163 to 185; sequence VTVAVATVVIFGTIAIFLYPAMY. Residues 186 to 261 lie on the Cytoplasmic side of the membrane; the sequence is PLLAHWFSPE…SPATGAEKSK (76 aa). Residues 262–284 traverse the membrane as a helical segment; it reads ITIPWFAIFFIVVAIFNSFHLLP. At 285–290 the chain is on the periplasmic side; sequence KAVVDM. Residues 291–313 form a helical membrane-spanning segment; sequence LVTLDTVLLAMAMAALGLTTHVS. The Cytoplasmic portion of the chain corresponds to 314-322; it reads ALKKAGAKP. A helical membrane pass occupies residues 323–345; the sequence is LLMALALFAWLIIGGGAINVLIH. Residues 346–349 lie on the Periplasmic side of the membrane; the sequence is SLIA.

This sequence belongs to the UPF0324 family.

It localises to the cell inner membrane. This is UPF0324 inner membrane protein YeiH (yeiH) from Salmonella typhimurium (strain LT2 / SGSC1412 / ATCC 700720).